The following is a 254-amino-acid chain: Small ribosomal subunit protein uS2 (254 aa).

This sequence belongs to the universal ribosomal protein uS2 family.

The sequence is that of Small ribosomal subunit protein uS2 from Oceanobacillus iheyensis (strain DSM 14371 / CIP 107618 / JCM 11309 / KCTC 3954 / HTE831).